A 263-amino-acid polypeptide reads, in one-letter code: Small ribosomal subunit protein eS4 (263 aa).

Residues leucine 42–aspartate 104 form the S4 RNA-binding domain.

Belongs to the eukaryotic ribosomal protein eS4 family.

The protein is Small ribosomal subunit protein eS4 (RPS4Y1) of Gorilla gorilla gorilla (Western lowland gorilla).